A 511-amino-acid chain; its full sequence is Centrosomal protein CCDC61 (511 aa).

Residues 1–144 form a head domain region; the sequence is MEVGTVVQEE…PLPLPYLGKP (144 aa). Residues 147–272 adopt a coiled-coil conformation; sequence AELQKEIRAL…RVKSLTTELA (126 aa). Disordered stretches follow at residues 306–403 and 447–486; these read TRVG…SREP and RGRK…SMDT. The segment covering 315–335 has biased composition (basic and acidic residues); that stretch reads GSRERIEDRGRRSEERVRRAD. A compositionally biased stretch (polar residues) spans 338–352; the sequence is GSRNCITRPSPSPTG. A compositionally biased stretch (basic and acidic residues) spans 366–378; that stretch reads DRQRRQKEAELKS.

The protein belongs to the CCDC61 family. As to quaternary structure, forms homodimers (via head domain).

It localises to the cytoplasm. The protein resides in the cytoskeleton. It is found in the microtubule organizing center. The protein localises to the centrosome. Its subcellular location is the centriolar satellite. It localises to the cilium basal body. Microtubule-binding centrosomal protein required for centriole cohesion, independently of the centrosome-associated protein/CEP250 and rootletin/CROCC linker. In interphase, required for anchoring microtubule at the mother centriole subdistal appendages and for centrosome positioning. During mitosis, may be involved in spindle assembly and chromatin alignment by regulating the organization of spindle microtubules into a symmetrical structure. Plays a non-essential role in ciliogenesis. In Danio rerio (Zebrafish), this protein is Centrosomal protein CCDC61.